The primary structure comprises 290 residues: Nucleotide-binding protein Sde_3181 (290 aa).

An ATP-binding site is contributed by 8–15 (GRSGSGKT). 60-63 (DARN) is a GTP binding site.

The protein belongs to the RapZ-like family.

Functionally, displays ATPase and GTPase activities. This Saccharophagus degradans (strain 2-40 / ATCC 43961 / DSM 17024) protein is Nucleotide-binding protein Sde_3181.